The following is a 213-amino-acid chain: NADH dehydrogenase [ubiquinone] iron-sulfur protein 7, mitochondrial (213 aa).

The N-terminal 38 residues, 1–38, are a transit peptide targeting the mitochondrion; sequence MAVLSAPGLRGFRILGLRSSVGPAVQARGVHQSVATDG. Residues 31 to 53 are disordered; it reads HQSVATDGPSSTQPALPKARAVA. Polar residues predominate over residues 33-44; sequence SVATDGPSSTQP. [4Fe-4S] cluster-binding residues include cysteine 88 and cysteine 89. Position 111 is a hydroxyarginine (arginine 111). Residues cysteine 153 and cysteine 183 each coordinate [4Fe-4S] cluster.

It belongs to the complex I 20 kDa subunit family. Core subunit of respiratory chain NADH dehydrogenase (Complex I) which is composed of 45 different subunits. This is a component of the iron-sulfur (IP) fragment of the enzyme. Requires [4Fe-4S] cluster as cofactor. In terms of processing, hydroxylated at Arg-111 by NDUFAF5 early in the pathway of assembly of complex I, before the formation of the juncture between peripheral and membrane arms.

The protein localises to the mitochondrion inner membrane. The enzyme catalyses a ubiquinone + NADH + 5 H(+)(in) = a ubiquinol + NAD(+) + 4 H(+)(out). In terms of biological role, core subunit of the mitochondrial membrane respiratory chain NADH dehydrogenase (Complex I) which catalyzes electron transfer from NADH through the respiratory chain, using ubiquinone as an electron acceptor. Essential for the catalytic activity of complex I. The sequence is that of NADH dehydrogenase [ubiquinone] iron-sulfur protein 7, mitochondrial (NDUFS7) from Homo sapiens (Human).